Here is a 344-residue protein sequence, read N- to C-terminus: Serine/arginine-rich splicing factor 6 (344 aa).

The RRM 1 domain maps to 1-72; sequence MPRVYIGRLS…ERVIVEHARG (72 aa). Phosphoserine is present on residues Ser45, Ser81, and Ser84. The disordered stretch occupies residues 75-103; that stretch reads RDRDGYSYGSRSGGGGYSSRRTSGRDKYG. In terms of domain architecture, RRM 2 spans 110 to 183; it reads YRLIVENLSS…RNIRLIEDKP (74 aa). An N6-acetyllysine modification is found at Lys165. A disordered region spans residues 176–344; that stretch reads IRLIEDKPRT…RSRSRSSSRD (169 aa). A Glycyl lysine isopeptide (Lys-Gly) (interchain with G-Cter in SUMO2) cross-link involves residue Lys182. The span at 185 to 250 shows a compositional bias: basic residues; sequence TSHRRSYSGS…RKSRSKSKSK (66 aa). 2 stretches are compositionally biased toward basic and acidic residues: residues 264–273 and 280–291; these read RSKDEYEKSR and SPKENGKGDIKS. A phosphoserine mark is found at Ser297 and Ser299. Position 303 is a phosphoserine; by DYRK1A (Ser303). Phosphoserine occurs at positions 314 and 316. Residues 322–344 are compositionally biased toward basic residues; sequence ATSRSRSRSRSKSRSRSRSSSRD.

It belongs to the splicing factor SR family. As to quaternary structure, binds SREK1/SFRS12. Interacts with DYRK1A. In terms of processing, extensively phosphorylated on serine residues in the RS domain. Phosphorylated by DYRK1A, probably in the RS domain. Phosphorylation by DYRK1A modulates alternative splice site selection and inhibits the expression of MAPT/Tau exon 10.

The protein localises to the nucleus. It is found in the nucleus speckle. Its function is as follows. Plays a role in constitutive splicing and modulates the selection of alternative splice sites. Plays a role in the alternative splicing of MAPT/Tau exon 10. Binds to alternative exons of TNC pre-mRNA and promotes the expression of alternatively spliced TNC. Plays a role in wound healing and in the regulation of keratinocyte differentiation and proliferation via its role in alternative splicing. In Homo sapiens (Human), this protein is Serine/arginine-rich splicing factor 6 (SRSF6).